We begin with the raw amino-acid sequence, 235 residues long: Putative N-acetylmannosamine-6-phosphate 2-epimerase (235 aa).

The protein belongs to the NanE family.

It carries out the reaction an N-acyl-D-glucosamine 6-phosphate = an N-acyl-D-mannosamine 6-phosphate. The protein operates within amino-sugar metabolism; N-acetylneuraminate degradation; D-fructose 6-phosphate from N-acetylneuraminate: step 3/5. Converts N-acetylmannosamine-6-phosphate (ManNAc-6-P) to N-acetylglucosamine-6-phosphate (GlcNAc-6-P). The chain is Putative N-acetylmannosamine-6-phosphate 2-epimerase from Enterobacter sp. (strain 638).